The chain runs to 552 residues: 5'-AMP-activated protein kinase catalytic subunit alpha-2 (552 aa).

Residues 16 to 268 form the Protein kinase domain; sequence YVLGDTLGVG…IKDIREHEWF (253 aa). ATP contacts are provided by residues 22 to 30 and K45; that span reads LGVGTFGKV. D139 acts as the Proton acceptor in catalysis. Phosphothreonine; by LKB1 and CaMKK2 is present on T172. The residue at position 258 (T258) is a Phosphothreonine. Residues 291–376 form an AIS region; sequence EAVKEVCEKF…PERMPPLIAD (86 aa). The residue at position 377 (S377) is a Phosphoserine. The interval 477–521 is disordered; that stretch reads VEQRSGSSTPQRSCSAAGLHRPRSSFDSTTAESHSLSGSLTGSLT. The span at 480–490 shows a compositional bias: polar residues; that stretch reads RSGSSTPQRSC. S491 is modified (phosphoserine). Over residues 501–510 the composition is skewed to polar residues; it reads SFDSTTAESH. The segment covering 511–521 has biased composition (low complexity); sequence SLSGSLTGSLT.

Belongs to the protein kinase superfamily. CAMK Ser/Thr protein kinase family. SNF1 subfamily. In terms of assembly, AMPK is a heterotrimer of an alpha catalytic subunit (PRKAA1 or PRKAA2), a beta (PRKAB1 or PRKAB2) and a gamma non-catalytic subunits (PRKAG1, PRKAG2 or PRKAG3). Interacts with FNIP1 and FNIP2. Interacts with DUSP29. Interacts with ARF6. The phosphorylated form at Thr-172 mediated by CamKK2 interacts with ACSS2. Requires Mg(2+) as cofactor. In terms of processing, ubiquitinated. Post-translationally, phosphorylated at Thr-172 by STK11/LKB1 in complex with STE20-related adapter-alpha (STRADA) pseudo kinase and CAB39. Also phosphorylated at Thr-172 by CAMKK2; triggered by a rise in intracellular calcium ions, without detectable changes in the AMP/ATP ratio. CAMKK1 can also phosphorylate Thr-172, but at much lower level. Dephosphorylated by protein phosphatase 2A and 2C (PP2A and PP2C). Phosphorylated by ULK1; leading to negatively regulate AMPK activity and suggesting the existence of a regulatory feedback loop between ULK1 and AMPK. Dephosphorylated by PPM1A and PPM1B at Thr-172 (mediated by STK11/LKB1).

It localises to the cytoplasm. The protein localises to the nucleus. It catalyses the reaction L-seryl-[protein] + ATP = O-phospho-L-seryl-[protein] + ADP + H(+). It carries out the reaction L-threonyl-[protein] + ATP = O-phospho-L-threonyl-[protein] + ADP + H(+). The catalysed reaction is L-seryl-[acetyl-CoA carboxylase] + ATP = O-phospho-L-seryl-[acetyl-CoA carboxylase] + ADP + H(+). The enzyme catalyses L-seryl-[3-hydroxy-3-methylglutaryl-coenzyme A reductase] + ATP = O-phospho-L-seryl-[3-hydroxy-3-methylglutaryl-coenzyme A reductase] + ADP + H(+). Its activity is regulated as follows. Activated by phosphorylation on Thr-172. Binding of AMP to non-catalytic gamma subunit (PRKAG1, PRKAG2 or PRKAG3) results in allosteric activation, inducing phosphorylation on Thr-172. AMP-binding to gamma subunit also sustains activity by preventing dephosphorylation of Thr-172. ADP also stimulates Thr-172 phosphorylation, without stimulating already phosphorylated AMPK. ATP promotes dephosphorylation of Thr-172, rendering the enzyme inactive. Under physiological conditions AMPK mainly exists in its inactive form in complex with ATP, which is much more abundant than AMP. Selectively inhibited by compound C (6-[4-(2-Piperidin-1-yl-ethoxy)-phenyl)]-3-pyridin-4-yl-pyyrazolo[1,5-a] pyrimidine. Activated by resveratrol, a natural polyphenol present in red wine, and S17834, a synthetic polyphenol. Salicylate/aspirin directly activates kinase activity, primarily by inhibiting Thr-172 dephosphorylation. In terms of biological role, catalytic subunit of AMP-activated protein kinase (AMPK), an energy sensor protein kinase that plays a key role in regulating cellular energy metabolism. In response to reduction of intracellular ATP levels, AMPK activates energy-producing pathways and inhibits energy-consuming processes: inhibits protein, carbohydrate and lipid biosynthesis, as well as cell growth and proliferation. AMPK acts via direct phosphorylation of metabolic enzymes, and by longer-term effects via phosphorylation of transcription regulators. Regulates lipid synthesis by phosphorylating and inactivating lipid metabolic enzymes such as ACACA, ACACB, GYS1, HMGCR and LIPE; regulates fatty acid and cholesterol synthesis by phosphorylating acetyl-CoA carboxylase (ACACA and ACACB) and hormone-sensitive lipase (LIPE) enzymes, respectively. Promotes lipolysis of lipid droplets by mediating phosphorylation of isoform 1 of CHKA (CHKalpha2). Regulates insulin-signaling and glycolysis by phosphorylating IRS1, PFKFB2 and PFKFB3. Involved in insulin receptor/INSR internalization. AMPK stimulates glucose uptake in muscle by increasing the translocation of the glucose transporter SLC2A4/GLUT4 to the plasma membrane, possibly by mediating phosphorylation of TBC1D4/AS160. Regulates transcription and chromatin structure by phosphorylating transcription regulators involved in energy metabolism such as CRTC2/TORC2, FOXO3, histone H2B, HDAC5, MEF2C, MLXIPL/ChREBP, EP300, HNF4A, p53/TP53, SREBF1, SREBF2 and PPARGC1A. Acts as a key regulator of glucose homeostasis in liver by phosphorylating CRTC2/TORC2, leading to CRTC2/TORC2 sequestration in the cytoplasm. In response to stress, phosphorylates 'Ser-36' of histone H2B (H2BS36ph), leading to promote transcription. Acts as a key regulator of cell growth and proliferation by phosphorylating FNIP1, TSC2, RPTOR, WDR24 and ATG1/ULK1: in response to nutrient limitation, negatively regulates the mTORC1 complex by phosphorylating RPTOR component of the mTORC1 complex and by phosphorylating and activating TSC2. Also phosphorylates and inhibits GATOR2 subunit WDR24 in response to nutrient limitation, leading to suppress glucose-mediated mTORC1 activation. In response to energetic stress, phosphorylates FNIP1, inactivating the non-canonical mTORC1 signaling, thereby promoting nuclear translocation of TFEB and TFE3, and inducing transcription of lysosomal or autophagy genes. In response to nutrient limitation, promotes autophagy by phosphorylating and activating ATG1/ULK1. In that process also activates WDR45/WIPI4. Phosphorylates CASP6, thereby preventing its autoprocessing and subsequent activation. AMPK also acts as a regulator of circadian rhythm by mediating phosphorylation of CRY1, leading to destabilize it. May regulate the Wnt signaling pathway by phosphorylating CTNNB1, leading to stabilize it. Also acts as a regulator of cellular polarity by remodeling the actin cytoskeleton; probably by indirectly activating myosin. Also phosphorylates CFTR, EEF2K, KLC1, NOS3 and SLC12A1. Plays an important role in the differential regulation of pro-autophagy (composed of PIK3C3, BECN1, PIK3R4 and UVRAG or ATG14) and non-autophagy (composed of PIK3C3, BECN1 and PIK3R4) complexes, in response to glucose starvation. Can inhibit the non-autophagy complex by phosphorylating PIK3C3 and can activate the pro-autophagy complex by phosphorylating BECN1. Upon glucose starvation, promotes ARF6 activation in a kinase-independent manner leading to cell migration. Upon glucose deprivation mediates the phosphorylation of ACSS2 at 'Ser-659', which exposes the nuclear localization signal of ACSS2, required for its interaction with KPNA1 and nuclear translocation. Upon stress, regulates mitochondrial fragmentation through phosphorylation of MTFR1L. This Pongo abelii (Sumatran orangutan) protein is 5'-AMP-activated protein kinase catalytic subunit alpha-2 (PRKAA2).